Consider the following 407-residue polypeptide: Argininosuccinate synthase (407 aa).

8–16 (AYSGGLDTT) is an ATP binding site. L-citrulline-binding residues include Tyr86 and Ser91. Position 116 (Gly116) interacts with ATP. Positions 118, 122, and 123 each coordinate L-aspartate. An L-citrulline-binding site is contributed by Asn122. The L-citrulline site is built by Arg126, Ser178, Ser187, Glu264, and Tyr276.

Belongs to the argininosuccinate synthase family. Type 1 subfamily. In terms of assembly, homotetramer.

It is found in the cytoplasm. The catalysed reaction is L-citrulline + L-aspartate + ATP = 2-(N(omega)-L-arginino)succinate + AMP + diphosphate + H(+). It participates in amino-acid biosynthesis; L-arginine biosynthesis; L-arginine from L-ornithine and carbamoyl phosphate: step 2/3. The sequence is that of Argininosuccinate synthase from Lachnoclostridium phytofermentans (strain ATCC 700394 / DSM 18823 / ISDg) (Clostridium phytofermentans).